The sequence spans 32 residues: Cytochrome b6-f complex subunit 8 (32 aa).

Residues 6–26 (IVSLAWAALMVVFTFSLSLVV) form a helical membrane-spanning segment.

The protein belongs to the PetN family. In terms of assembly, the 4 large subunits of the cytochrome b6-f complex are cytochrome b6, subunit IV (17 kDa polypeptide, PetD), cytochrome f and the Rieske protein, while the 4 small subunits are PetG, PetL, PetM and PetN. The complex functions as a dimer.

The protein resides in the plastid. It localises to the chloroplast thylakoid membrane. Its function is as follows. Component of the cytochrome b6-f complex, which mediates electron transfer between photosystem II (PSII) and photosystem I (PSI), cyclic electron flow around PSI, and state transitions. The chain is Cytochrome b6-f complex subunit 8 from Illicium oligandrum (Star anise).